A 415-amino-acid chain; its full sequence is MSLCKDSIYILMSNLYSKGMAYLFYFITAFLLGTEAFGILKGLMPIADTLTIFFSSGIPPAIAKFLAEEKEVDINKYIPILYLMILLSVVGFILTPYIKYILGGHYLNLPNILYFAVGLCVVASTVIAFSRGILQGLLKMKYLSLTWIVEYTAKVILVFILTLYLGIFGSLLSISLAYLVGGIFGLYLIYKALKGKFDFKKLIDIKNTTKNIFSNFNLDILRYSIPIALTSSSYRLFGDIDNIVIMSIMGGFWSGIYGYSSLISRGIFMFASAVSIPLLPRISKTKDLSLLKEGIIQNTIFSSIFVIGCLFFPEIPLIAFFKTANPEGILCLRILAISSLFMSYYTLISSALQGLGYAKISFYIILFGLVLNIILNLILVNAYGIVGGSLATLITSISVFLIGVFAILRIKKHII.

10 helical membrane passes run 20-40 (MAYL…FGIL), 43-63 (LMPI…PAIA), 78-98 (IPIL…TPYI), 109-129 (LPNI…VIAF), 155-175 (VILV…LSIS), 243-263 (IVIM…SSLI), 300-320 (IFSS…LIAF), 328-348 (GILC…YTLI), 360-380 (ISFY…LILV), and 388-408 (GSLA…FAIL).

Belongs to the polysaccharide synthase family.

It localises to the cell membrane. This is an uncharacterized protein from Methanocaldococcus jannaschii (strain ATCC 43067 / DSM 2661 / JAL-1 / JCM 10045 / NBRC 100440) (Methanococcus jannaschii).